We begin with the raw amino-acid sequence, 730 residues long: Polyribonucleotide nucleotidyltransferase (730 aa).

Residues Asp494 and Asp500 each contribute to the Mg(2+) site. One can recognise a KH domain in the interval 561–622 (PRIQTIQIDP…EAMNRAIQEI (62 aa)). The S1 motif domain occupies 642 to 711 (GKIYTGRVTG…RSGKVRLSRK (70 aa)).

The protein belongs to the polyribonucleotide nucleotidyltransferase family. It depends on Mg(2+) as a cofactor.

It localises to the cytoplasm. It carries out the reaction RNA(n+1) + phosphate = RNA(n) + a ribonucleoside 5'-diphosphate. Functionally, involved in mRNA degradation. Catalyzes the phosphorolysis of single-stranded polyribonucleotides processively in the 3'- to 5'-direction. The polypeptide is Polyribonucleotide nucleotidyltransferase (Opitutus terrae (strain DSM 11246 / JCM 15787 / PB90-1)).